Reading from the N-terminus, the 204-residue chain is ATP phosphoribosyltransferase (204 aa).

This sequence belongs to the ATP phosphoribosyltransferase family. Short subfamily. Heteromultimer composed of HisG and HisZ subunits.

It localises to the cytoplasm. It catalyses the reaction 1-(5-phospho-beta-D-ribosyl)-ATP + diphosphate = 5-phospho-alpha-D-ribose 1-diphosphate + ATP. Its pathway is amino-acid biosynthesis; L-histidine biosynthesis; L-histidine from 5-phospho-alpha-D-ribose 1-diphosphate: step 1/9. Its function is as follows. Catalyzes the condensation of ATP and 5-phosphoribose 1-diphosphate to form N'-(5'-phosphoribosyl)-ATP (PR-ATP). Has a crucial role in the pathway because the rate of histidine biosynthesis seems to be controlled primarily by regulation of HisG enzymatic activity. In Staphylococcus aureus (strain Mu3 / ATCC 700698), this protein is ATP phosphoribosyltransferase.